The primary structure comprises 153 residues: MTHDNKLQVEAIKRGTVIDHIPAQIGFKLLSLFKLTETDQRITIGLNLPSGEMGRKDLIKIENTFLSEDQVDQLALYAPQATVNRIDNYEVVGKSRPSLPERIDNVLVCPNSNCISHAEPVSSSFAVLKRANDIALKCKYCEKEFSHNVVLAN.

Cysteine 109, cysteine 114, cysteine 138, and cysteine 141 together coordinate Zn(2+).

The protein belongs to the PyrI family. In terms of assembly, contains catalytic and regulatory chains. Zn(2+) serves as cofactor.

Involved in allosteric regulation of aspartate carbamoyltransferase. The protein is Aspartate carbamoyltransferase regulatory chain of Shigella dysenteriae serotype 1 (strain Sd197).